Consider the following 290-residue polypeptide: 4-hydroxybenzoate octaprenyltransferase (290 aa).

Transmembrane regions (helical) follow at residues 21–41 (IGTLLLLWPTLWALFLSVKGM), 44–64 (LSILSIFVLGVIFMRAAGCVI), 84–104 (LATGAATPEEAKWLFVLLVFC), 106–126 (FILVLFLNTYAIVLSFIAVFL), 142–162 (LFLGMAFGWSIPMAYGASIEA), 212–232 (IISLLQIVTLFFLGLIGYLSQ), 235–255 (TSYFVVLFLATLLFVYQCKLI), and 267–287 (FLNNNYFGAMVFVAFLFGIFF).

Belongs to the UbiA prenyltransferase family. Requires Mg(2+) as cofactor.

The protein localises to the cell inner membrane. The enzyme catalyses all-trans-octaprenyl diphosphate + 4-hydroxybenzoate = 4-hydroxy-3-(all-trans-octaprenyl)benzoate + diphosphate. It participates in cofactor biosynthesis; ubiquinone biosynthesis. Catalyzes the prenylation of para-hydroxybenzoate (PHB) with an all-trans polyprenyl group. Mediates the second step in the final reaction sequence of ubiquinone-8 (UQ-8) biosynthesis, which is the condensation of the polyisoprenoid side chain with PHB, generating the first membrane-bound Q intermediate 3-octaprenyl-4-hydroxybenzoate. The polypeptide is 4-hydroxybenzoate octaprenyltransferase (Pasteurella multocida (strain Pm70)).